Reading from the N-terminus, the 1132-residue chain is Error-prone DNA polymerase (1132 aa).

This sequence belongs to the DNA polymerase type-C family. DnaE2 subfamily.

The protein localises to the cytoplasm. The enzyme catalyses DNA(n) + a 2'-deoxyribonucleoside 5'-triphosphate = DNA(n+1) + diphosphate. Its function is as follows. DNA polymerase involved in damage-induced mutagenesis and translesion synthesis (TLS). It is not the major replicative DNA polymerase. This chain is Error-prone DNA polymerase, found in Anaeromyxobacter dehalogenans (strain 2CP-C).